The chain runs to 134 residues: ATP synthase epsilon chain (134 aa).

Belongs to the ATPase epsilon chain family. As to quaternary structure, F-type ATPases have 2 components, CF(1) - the catalytic core - and CF(0) - the membrane proton channel. CF(1) has five subunits: alpha(3), beta(3), gamma(1), delta(1), epsilon(1). CF(0) has three main subunits: a, b and c.

It is found in the cell membrane. In terms of biological role, produces ATP from ADP in the presence of a proton gradient across the membrane. This Listeria monocytogenes serotype 4a (strain HCC23) protein is ATP synthase epsilon chain.